The primary structure comprises 428 residues: Histidinol dehydrogenase (428 aa).

3 residues coordinate NAD(+): Tyr-129, Gln-188, and Asn-211. 3 residues coordinate substrate: Ser-234, Gln-256, and His-259. Zn(2+) contacts are provided by Gln-256 and His-259. Residues Glu-323 and His-324 each act as proton acceptor in the active site. Substrate-binding residues include His-324, Asp-357, Glu-411, and His-416. Asp-357 serves as a coordination point for Zn(2+). His-416 serves as a coordination point for Zn(2+).

The protein belongs to the histidinol dehydrogenase family. Requires Zn(2+) as cofactor.

The enzyme catalyses L-histidinol + 2 NAD(+) + H2O = L-histidine + 2 NADH + 3 H(+). Its pathway is amino-acid biosynthesis; L-histidine biosynthesis; L-histidine from 5-phospho-alpha-D-ribose 1-diphosphate: step 9/9. In terms of biological role, catalyzes the sequential NAD-dependent oxidations of L-histidinol to L-histidinaldehyde and then to L-histidine. The protein is Histidinol dehydrogenase of Caulobacter vibrioides (strain ATCC 19089 / CIP 103742 / CB 15) (Caulobacter crescentus).